The following is a 233-amino-acid chain: PEP2-like protein NECHADRAFT_97050 (233 aa).

Belongs to the PEP2 family.

Functionally, may contribute to the ability of the fungus to cause disease on pea plants. The polypeptide is PEP2-like protein NECHADRAFT_97050 (Fusarium vanettenii (strain ATCC MYA-4622 / CBS 123669 / FGSC 9596 / NRRL 45880 / 77-13-4) (Fusarium solani subsp. pisi)).